The sequence spans 186 residues: MNTADAANELGVSTKTVQRWVKQLQLPASRNELGHYFFTEDDIAILKEVKEQLKNGTPMQDVTVKRPKKTFFIKKNEMIQTKEPALQLNERLEERLQRFLEHEQLERELLQKKIAELERKLEQKADEVVSYQLLQQRRELEEERQQIKHLEQKISQLESMNRREKDTAVRREEKKPKSKLKSIFSF.

The H-T-H motif DNA-binding region spans 3-23 (TADAANELGVSTKTVQRWVKQ). The stretch at 90–170 (ERLEERLQRF…NRREKDTAVR (81 aa)) forms a coiled coil. Residues 158–186 (ESMNRREKDTAVRREEKKPKSKLKSIFSF) form a disordered region. Residues 160-175 (MNRREKDTAVRREEKK) are compositionally biased toward basic and acidic residues.

It belongs to the RacA family.

The protein localises to the cytoplasm. In terms of biological role, required for the formation of axial filaments and for anchoring the origin regions at the cell poles in sporulating cells, thus ensuring proper chromosome segregation in the prespore. Binds in a dispersed manner throughout the chromosome but preferentially to sites clustered in the origin portion of the chromosome, causing condensation of the chromosome and its remodeling into an elongated, anchored structure. This is Chromosome-anchoring protein RacA from Bacillus licheniformis (strain ATCC 14580 / DSM 13 / JCM 2505 / CCUG 7422 / NBRC 12200 / NCIMB 9375 / NCTC 10341 / NRRL NRS-1264 / Gibson 46).